A 37-amino-acid polypeptide reads, in one-letter code: Large ribosomal subunit protein bL36 (37 aa).

This sequence belongs to the bacterial ribosomal protein bL36 family.

This Idiomarina loihiensis (strain ATCC BAA-735 / DSM 15497 / L2-TR) protein is Large ribosomal subunit protein bL36.